The primary structure comprises 264 residues: Putative hydro-lyase Psyr_0498 (264 aa).

It belongs to the D-glutamate cyclase family.

The chain is Putative hydro-lyase Psyr_0498 from Pseudomonas syringae pv. syringae (strain B728a).